Here is a 257-residue protein sequence, read N- to C-terminus: Flagellar brake protein YcgR 2 (257 aa).

Positions 131 to 244 constitute a PilZ domain; the sequence is QRREFFRVQT…AERTLQRVVT (114 aa).

It belongs to the YcgR family. Monomer. Interacts with the flagellar basal bodies.

The protein localises to the bacterial flagellum basal body. Its function is as follows. Acts as a flagellar brake, regulating swimming and swarming in a bis-(3'-5') cyclic diguanylic acid (c-di-GMP)-dependent manner. Binds 1 c-di-GMP dimer per subunit. Increasing levels of c-di-GMP lead to decreased motility. This is Flagellar brake protein YcgR 2 from Paraburkholderia phytofirmans (strain DSM 17436 / LMG 22146 / PsJN) (Burkholderia phytofirmans).